The primary structure comprises 151 residues: Small ribosomal subunit protein uS15 (151 aa).

The protein belongs to the universal ribosomal protein uS15 family.

The polypeptide is Small ribosomal subunit protein uS15 (RPS13) (Lumbricus rubellus (Humus earthworm)).